The chain runs to 644 residues: Leucine-rich repeat protein soc-2 homolog (644 aa).

Residues Met-1 to Gly-19 are compositionally biased toward low complexity. Disordered stretches follow at residues Met-1–Leu-60 and Asn-82–Asp-150. Gly residues-rich tracts occupy residues Gly-26 to Ala-50 and Gly-87 to Gly-96. Over residues Gln-99–Asn-117 the composition is skewed to polar residues. LRR repeat units follow at residues Gly-164–Cys-185, His-187–Leu-208, Ser-210–Cys-231, Gln-233–Leu-254, Ser-256–Leu-277, Asn-279–Leu-300, Asn-302–Cys-323, Asn-325–Leu-346, Ser-348–Lys-370, Ser-371–Ser-392, Gly-395–Gln-416, Asn-419–Arg-440, Gly-443–Trp-464, Asn-466–Leu-487, Asn-489–Leu-510, Arg-512–Leu-533, Glu-535–Leu-556, Asn-558–Leu-579, Ser-581–Cys-603, and Asn-605–Gly-626.

This sequence belongs to the SHOC2 family.

Functionally, acts as a Ras effector and participates in MAPK pathway activation. Probably acts as a regulatory subunit of protein phosphatase that specifically dephosphorylates Raf kinase and stimulate Raf activity at specialized signaling complexes upon Ras activation. The polypeptide is Leucine-rich repeat protein soc-2 homolog (Sur-8) (Drosophila erecta (Fruit fly)).